An 858-amino-acid polypeptide reads, in one-letter code: Bifunctional uridylyltransferase/uridylyl-removing enzyme (858 aa).

The segment at 1-318 is uridylyltransferase; it reads MNPTDLHPIK…FPRPESDARA (318 aa). The uridylyl-removing stretch occupies residues 319–674; the sequence is IDEEFRSLHG…VRPTEEGSGL (356 aa). One can recognise an HD domain in the interval 437-559; sequence VDQHTLAVIR…VKDERHLNAL (123 aa). ACT domains follow at residues 675–756 and 789–858; these read QIMV…LADV and RLSV…LAGE.

The protein belongs to the GlnD family. The cofactor is Mg(2+).

It catalyses the reaction [protein-PII]-L-tyrosine + UTP = [protein-PII]-uridylyl-L-tyrosine + diphosphate. The enzyme catalyses [protein-PII]-uridylyl-L-tyrosine + H2O = [protein-PII]-L-tyrosine + UMP + H(+). Its activity is regulated as follows. Uridylyltransferase (UTase) activity is inhibited by glutamine, while glutamine activates uridylyl-removing (UR) activity. Modifies, by uridylylation and deuridylylation, the PII regulatory proteins (GlnB and homologs), in response to the nitrogen status of the cell that GlnD senses through the glutamine level. Under low glutamine levels, catalyzes the conversion of the PII proteins and UTP to PII-UMP and PPi, while under higher glutamine levels, GlnD hydrolyzes PII-UMP to PII and UMP (deuridylylation). Thus, controls uridylylation state and activity of the PII proteins, and plays an important role in the regulation of nitrogen assimilation and metabolism. This is Bifunctional uridylyltransferase/uridylyl-removing enzyme from Bordetella avium (strain 197N).